The following is a 510-amino-acid chain: Holliday junction branch migration ATPase PINA (510 aa).

As to quaternary structure, homohexamer. Interacts with Holliday junction resolvase Hjc, interacts with helicase Hjm (Hel308).

The catalysed reaction is ATP + H2O = ADP + phosphate + H(+). In terms of biological role, important for growth at low temperatures (less than 65 degrees Celsius in this organism). Promotes Holliday junction (HJ) branch migration and unwinds Y-shaped DNA (but not replication forks or dsDNA) in an ATP hydrolysis-dependent manner. Stimulates cleavage by HJ resolvase Hjc. Hjc, Hjm (Hel308) and PINA coordinate HJ migration and cleavage of replication forks in a coordinated way. Probably acts as an ATP-dependent pump that pulls DNA through the hexamer. The chain is Holliday junction branch migration ATPase PINA from Sulfolobus acidocaldarius (strain ATCC 33909 / DSM 639 / JCM 8929 / NBRC 15157 / NCIMB 11770).